The sequence spans 224 residues: 7-cyano-7-deazaguanine synthase (224 aa).

12–22 (LSGGLDSSTVT) is a binding site for ATP. Zn(2+) contacts are provided by cysteine 193, cysteine 201, cysteine 204, and cysteine 207.

This sequence belongs to the QueC family. The cofactor is Zn(2+).

The enzyme catalyses 7-carboxy-7-deazaguanine + NH4(+) + ATP = 7-cyano-7-deazaguanine + ADP + phosphate + H2O + H(+). The protein operates within purine metabolism; 7-cyano-7-deazaguanine biosynthesis. In terms of biological role, catalyzes the ATP-dependent conversion of 7-carboxy-7-deazaguanine (CDG) to 7-cyano-7-deazaguanine (preQ(0)). This chain is 7-cyano-7-deazaguanine synthase, found in Prochlorococcus marinus (strain AS9601).